The following is a 355-amino-acid chain: Alanine racemase (355 aa).

Residue K34 is the Proton acceptor; specific for D-alanine of the active site. An N6-(pyridoxal phosphate)lysine modification is found at K34. Position 133 (R133) interacts with substrate. Y249 functions as the Proton acceptor; specific for L-alanine in the catalytic mechanism. Substrate is bound at residue M297.

Belongs to the alanine racemase family. Requires pyridoxal 5'-phosphate as cofactor.

It catalyses the reaction L-alanine = D-alanine. The protein operates within amino-acid biosynthesis; D-alanine biosynthesis; D-alanine from L-alanine: step 1/1. Functionally, catalyzes the interconversion of L-alanine and D-alanine. May also act on other amino acids. The chain is Alanine racemase (alr) from Rickettsia canadensis (strain McKiel).